The primary structure comprises 22 residues: Defensin D1 (22 aa).

This sequence belongs to the DEFL family. Group II subfamily.

In terms of biological role, antimicrobial peptide. Active against Gram-positive and Gram-negative bacterial pathogens. The chain is Defensin D1 from Spinacia oleracea (Spinach).